The primary structure comprises 119 residues: MVLTNSKQPRKQRKALYNAPLHLRNSVMSAMLAKELKEKYAKNSLPVKKGDTVKVLRGNFKGIEGEVSKVDYAGYKIIVEGVVNKKQDGNETAYPIHPSNVMITKLDESDEKRFKNSSN.

Belongs to the universal ribosomal protein uL24 family. In terms of assembly, part of the 50S ribosomal subunit.

In terms of biological role, one of two assembly initiator proteins, it binds directly to the 5'-end of the 23S rRNA, where it nucleates assembly of the 50S subunit. Functionally, located at the polypeptide exit tunnel on the outside of the subunit. The protein is Large ribosomal subunit protein uL24 of Methanococcus maripaludis (strain DSM 14266 / JCM 13030 / NBRC 101832 / S2 / LL).